Consider the following 331-residue polypeptide: Phosphoenolpyruvate transferase (331 aa).

D63 contacts 7,8-didemethyl-8-hydroxy-5-deazariboflavin.

Belongs to the CofD family. In terms of assembly, homodimer. Mg(2+) serves as cofactor.

The catalysed reaction is enolpyruvoyl-2-diphospho-5'-guanosine + 7,8-didemethyl-8-hydroxy-5-deazariboflavin = dehydro coenzyme F420-0 + GMP + H(+). The protein operates within cofactor biosynthesis; coenzyme F420 biosynthesis. In terms of biological role, catalyzes the transfer of the phosphoenolpyruvate moiety from enoylpyruvoyl-2-diphospho-5'-guanosine (EPPG) to 7,8-didemethyl-8-hydroxy-5-deazariboflavin (FO) with the formation of dehydro coenzyme F420-0 and GMP. In Mycobacterium sp. (strain JLS), this protein is Phosphoenolpyruvate transferase.